The chain runs to 198 residues: Sortase D (198 aa).

Residues 7–25 (LFIIAAGLVIAGYGGFKLI) form a helical membrane-spanning segment. Residues 36 to 46 (KEAKLAAKKPQ) show a composition bias toward basic and acidic residues. The interval 36–67 (KEAKLAAKKPQEASGTKNSTDQAKNKASFKPE) is disordered. The segment covering 48-57 (ASGTKNSTDQ) has biased composition (polar residues). Residue histidine 119 is the Proton donor/acceptor of the active site. Cysteine 177 (acyl-thioester intermediate) is an active-site residue.

It belongs to the bacterial sortase family. Class D subfamily.

Its subcellular location is the cell membrane. Functionally, transpeptidase that anchors surface proteins to the cell wall. Recognizes and modifies its substrate by proteolytic cleavage of a C-terminal sorting signal. Following cleavage, a covalent intermediate is formed via a thioester bond between the sortase and its substrate, which is then transferred and covalently attached to the cell wall. This sortase recognizes a Leu-Pro-Asp-Thr-Ser/Ala (LPDTS/A) motif. It has two substrates, YhcR and YfkN. The protein is Sortase D of Bacillus subtilis (strain 168).